The chain runs to 647 residues: Zinc finger protein 567 (647 aa).

The 46-residue stretch at 32–77 folds into the KRAB domain; that stretch reads MDVMLENYCHLISVGCHMTKPDVILKLERGEEPWTSFKGHTCLEEN. Glycyl lysine isopeptide (Lys-Gly) (interchain with G-Cter in SUMO2) cross-links involve residues K173, K202, and K217. The C2H2-type 1; degenerate zinc-finger motif lies at 210 to 232; the sequence is FEYNDCEKAFLKRGGPVTHSRTY. 7 consecutive C2H2-type zinc fingers follow at residues 253–275, 281–303, 309–331, 337–359, 365–387, 393–415, and 421–443; these read HTCT…QGIH, YQCH…QRTH, FVCN…QRTH, YECP…QRTH, YECS…QRIH, YICK…QRTH, and YICN…EKTH. K447 participates in a covalent cross-link: Glycyl lysine isopeptide (Lys-Gly) (interchain with G-Cter in SUMO2). C2H2-type zinc fingers lie at residues 449–471, 477–499, 505–527, 533–555, 561–583, 589–611, and 617–639; these read YICN…QRTH, YECP…HRTH, YECN…QRIH, YICN…QKIH, YECP…QRTH, and YKCS…QRTH.

Belongs to the krueppel C2H2-type zinc-finger protein family.

Its subcellular location is the nucleus. In terms of biological role, may be involved in transcriptional regulation. This is Zinc finger protein 567 (ZNF567) from Bos taurus (Bovine).